Here is a 593-residue protein sequence, read N- to C-terminus: Solute carrier family 13 member 2 (593 aa).

Transmembrane regions (helical) follow at residues 11–31 (YRMY…PILV), 53–73 (ALPL…MGIM), 86–106 (TNVL…WNLH), and 121–141 (PALL…WISN). Over residues 164–184 (SNVEEGSDNPTFELQEPSPQK) the composition is skewed to polar residues. The tract at residues 164–204 (SNVEEGSDNPTFELQEPSPQKETSKVDEKDNGQAQPLPAVP) is disordered. A compositionally biased stretch (basic and acidic residues) spans 185–194 (ETSKVDEKDN). Transmembrane regions (helical) follow at residues 221 to 241 (GMSL…LTGT), 270 to 290 (FAFP…QILF), 327 to 347 (PMSF…LLWF), 369 to 389 (VMVS…MVPS), 451 to 471 (LMPL…LLVA), 485 to 505 (LLLP…LYVM), 514 to 534 (LAFM…FGGL), and 543 to 563 (GIML…SWGV).

This sequence belongs to the SLC13A/DASS transporter (TC 2.A.47) family. NADC subfamily. Abundant in kidney and small intestine.

It localises to the apical cell membrane. It carries out the reaction succinate(out) + 3 Na(+)(out) = succinate(in) + 3 Na(+)(in). The catalysed reaction is fumarate(out) + 3 Na(+)(out) = fumarate(in) + 3 Na(+)(in). The enzyme catalyses 2-oxoglutarate(out) + 3 Na(+)(out) = 2-oxoglutarate(in) + 3 Na(+)(in). Li(+) decreases succinate transport in the presence of Na(+), by competing at one of the three cation binding sites. In terms of biological role, low-affinity sodium-dicarboxylate cotransporter, that mediates the entry of citric acid cycle intermediates, such as succinate, citrate, fumarate and alpha-ketoglutarate (2-oxoglutarate) into the small intestine and renal proximal tubule. Transports the dicarboxylate into the cell with a probable stoichiometry of 3 Na(+) for 1 divalent dicarboxylate, rendering the process electrogenic. Citrate is transported in protonated form as a divalent anion, rather than the trivalent form which is normally found in blood. Has a critical role in renal dicarboxylate transport. The protein is Solute carrier family 13 member 2 (SLC13A2) of Oryctolagus cuniculus (Rabbit).